We begin with the raw amino-acid sequence, 42 residues long: Fungal defensin eurocin (42 aa).

Beta-D-GlcNAc-(1-&gt;4)-Mur2Ac(oyl-L-Ala-gamma-D-Glu-L-Lys-D-Ala-D-Ala)-di-trans,octa-cis-undecaprenyl diphosphate-binding residues include Phe-2, Gly-3, Cys-4, and His-14. Cystine bridges form between Cys-4/Cys-27, Cys-11/Cys-38, and Cys-15/Cys-40. The tract at residues 31–35 (WYLGH) is interaction site with membranes lipids. Cys-38 contributes to the beta-D-GlcNAc-(1-&gt;4)-Mur2Ac(oyl-L-Ala-gamma-D-Glu-L-Lys-D-Ala-D-Ala)-di-trans,octa-cis-undecaprenyl diphosphate binding site.

Belongs to the invertebrate defensin family.

Its subcellular location is the secreted. The protein localises to the target cell membrane. Functionally, antimicrobial peptide that acts against Gram-positive bacteria but not against Gram-negative bacteria. It selectively inhibits peptidoglycan biosynthesis through complex formation with the cell wall precursor lipid II (1:1 molar ratio) thus inhibiting cell wall synthesis. It does not disrupt cell membranes. In vivo, is effective against an intraperitoneal infection with S.pneumoniae. In vitro, it shows very low hemolytic and cytolytic activities. The polypeptide is Fungal defensin eurocin (Aspergillus amstelodami).